The sequence spans 446 residues: StAR-related lipid transfer protein 3 (446 aa).

Residues Met1 to Arg52 are Cytoplasmic-facing. An MENTAL domain is found at Ile47 to Ser218. The helical transmembrane segment at Thr53 to Leu73 threads the bilayer. At Asn74 to Ser95 the chain is on the extracellular side. Residues Phe96–Val116 form a helical membrane-spanning segment. At Leu117 to His121 the chain is on the cytoplasmic side. The chain crosses the membrane as a helical span at residues Trp122 to Leu142. Residues Ser143–Gly149 lie on the Extracellular side of the membrane. The chain crosses the membrane as a helical span at residues Ala150 to Leu170. The Cytoplasmic portion of the chain corresponds to Asp171–Ala446. An FFAT motif is present at residues Gln207–Glu213. Residues Ser210, Ser218, and Ser222 each carry the phosphoserine modification. The 214-residue stretch at Ser231 to Ala444 folds into the START domain.

This sequence belongs to the STARD3 family. As to quaternary structure, homodimer. Interacts (via the MENTAL domain) with STARD3NL. Interacts (via phosphorylated FFAT motif) with VAPA (via MSP domain). Interacts (via phosphorylated FFAT motif) with VAPB (via MSP domain). Interacts (via phosphorylated FFAT motif) with MOSPD2 (via MSP domain); this interaction allows enrichment of MOSPD2 around endosomes. Phosphorylation at Ser-210 is necessary and sufficient for the direct interaction of the phosphorylated FFAT motif with the MSP domain of MOSPD2, VAPA and VAPB and allows the tethering of two membranes that participates in the formation of ER-endosome contacts. Phosphorylation of the FFAT motif leads to conformation changes. Additional phosphorylations around the core FFAT motif (QFYSPPE) are not essential but strengthen the interaction with MOSPD2, VAPA and VAPB. Phosphorylation at Ser-210 of FFAT motif drives membrane tethering between the endoplasmic reticulum and late endosomes via interaction with VAPA and VAPB that in turn allows the efficient transport of sterol mediated by the START domain.

It localises to the late endosome membrane. The enzyme catalyses cholesterol(in) = cholesterol(out). In terms of biological role, sterol-binding protein that mediates cholesterol transport from the endoplasmic reticulum to endosomes. The sterol transport mechanism is triggered by phosphorylation of FFAT motif that leads to membrane tethering between the endoplasmic reticulum and late endosomes via interaction with VAPA and VAPB. Acts as a lipid transfer protein that redirects sterol to the endosome at the expense of the cell membrane and favors membrane formation inside endosomes. May also mediate cholesterol transport between other membranes, such as mitochondria membrane or cell membrane. However, such results need additional experimental evidences; probably mainly mediates cholesterol transport from the endoplasmic reticulum to endosomes. Does not activate transcriptional cholesterol sensing. Able to bind other lipids, such as lutein, a xanthophyll carotenoids that form the macular pigment of the retina. The sequence is that of StAR-related lipid transfer protein 3 from Mus musculus (Mouse).